Here is a 146-residue protein sequence, read N- to C-terminus: Oleosin (146 aa).

Ala2 is modified (N-acetylalanine). Transmembrane regions (helical) follow at residues Ile22–Thr42, Val56–Ala76, and Gly77–Asn97. A Proline-knot motif is present at residues Pro55 to Pro66.

It belongs to the oleosin family. In terms of tissue distribution, expressed in pollen (at protein level).

The protein localises to the lipid droplet. It localises to the membrane. The sequence is that of Oleosin from Pinus elliottii (Slash pine).